A 377-amino-acid chain; its full sequence is Nitric oxide reductase FlRd-NAD(+) reductase (377 aa).

The protein belongs to the FAD-dependent oxidoreductase family. Requires FAD as cofactor.

The protein resides in the cytoplasm. It carries out the reaction 2 reduced [nitric oxide reductase rubredoxin domain] + NAD(+) + H(+) = 2 oxidized [nitric oxide reductase rubredoxin domain] + NADH. Its pathway is nitrogen metabolism; nitric oxide reduction. Functionally, one of at least two accessory proteins for anaerobic nitric oxide (NO) reductase. Reduces the rubredoxin moiety of NO reductase. This is Nitric oxide reductase FlRd-NAD(+) reductase from Salmonella paratyphi C (strain RKS4594).